We begin with the raw amino-acid sequence, 331 residues long: UBX domain-containing protein 2B (331 aa).

Disordered regions lie at residues 1–26 and 40–65; these read MAEG…SARD and KCKS…QRFY. The residue at position 2 (Ala2) is an N-acetylalanine. At Ser56 the chain carries Phosphoserine. Position 59 is a phosphothreonine (Thr59). Ser66 bears the Phosphoserine mark. The region spanning 141–206 is the SEP domain; that stretch reads DVQILLKLWS…MEDHQDQEYI (66 aa). Ser231, Ser234, and Ser235 each carry phosphoserine. The region spanning 252–329 is the UBX domain; that stretch reads DSVPTTKIQI…DILNTVLLQQ (78 aa).

Belongs to the NSFL1C family. Interacts with VCP. Does not bind ubiquitin.

Its subcellular location is the nucleus. It localises to the cytoplasm. The protein localises to the cytosol. The protein resides in the endoplasmic reticulum. It is found in the golgi apparatus. Its subcellular location is the cytoskeleton. It localises to the microtubule organizing center. The protein localises to the centrosome. In terms of biological role, adapter protein required for Golgi and endoplasmic reticulum biogenesis. Involved in Golgi and endoplasmic reticulum maintenance during interphase and in their reassembly at the end of mitosis. The complex formed with VCP has membrane fusion activity; membrane fusion activity requires USO1-GOLGA2 tethering and BET1L. VCPIP1 is also required, but not its deubiquitinating activity. Together with NSFL1C/p47, regulates the centrosomal levels of kinase AURKA/Aurora A during mitotic progression by promoting AURKA removal from centrosomes in prophase. Also, regulates spindle orientation during mitosis. The protein is UBX domain-containing protein 2B (UBXN2B) of Homo sapiens (Human).